Here is a 355-residue protein sequence, read N- to C-terminus: 3-dehydroquinate synthase (355 aa).

NAD(+)-binding positions include 71–76 (EGEASK), 105–109 (GVVGD), 129–130 (TS), Lys142, and Lys151. Residues Glu184, His246, and His263 each coordinate Zn(2+).

The protein belongs to the sugar phosphate cyclases superfamily. Dehydroquinate synthase family. Requires Co(2+) as cofactor. The cofactor is Zn(2+). It depends on NAD(+) as a cofactor.

It is found in the cytoplasm. The catalysed reaction is 7-phospho-2-dehydro-3-deoxy-D-arabino-heptonate = 3-dehydroquinate + phosphate. It participates in metabolic intermediate biosynthesis; chorismate biosynthesis; chorismate from D-erythrose 4-phosphate and phosphoenolpyruvate: step 2/7. In terms of biological role, catalyzes the conversion of 3-deoxy-D-arabino-heptulosonate 7-phosphate (DAHP) to dehydroquinate (DHQ). This Streptococcus thermophilus (strain ATCC BAA-491 / LMD-9) protein is 3-dehydroquinate synthase.